The sequence spans 190 residues: Peptide methionine sulfoxide reductase A2-2 (190 aa).

The tract at residues 1-20 (MSNDTGADGGAANPDLGPDA) is disordered. Residues 10–20 (GAANPDLGPDA) are compositionally biased toward low complexity.

It belongs to the MsrA Met sulfoxide reductase family.

Its subcellular location is the cytoplasm. It is found in the cytosol. The catalysed reaction is L-methionyl-[protein] + [thioredoxin]-disulfide + H2O = L-methionyl-(S)-S-oxide-[protein] + [thioredoxin]-dithiol. It catalyses the reaction [thioredoxin]-disulfide + L-methionine + H2O = L-methionine (S)-S-oxide + [thioredoxin]-dithiol. Catalyzes the reduction of methionine sulfoxide (MetSO) to methionine in proteins. Plays a protective role against oxidative stress by restoring activity to proteins that have been inactivated by methionine oxidation. MSRA family specifically reduces the MetSO S-enantiomer. The chain is Peptide methionine sulfoxide reductase A2-2 (MSRA2-2) from Oryza sativa subsp. japonica (Rice).